The chain runs to 368 residues: Tetraacyldisaccharide 4'-kinase (368 aa).

66–73 (TVGGTGKT) contacts ATP.

Belongs to the LpxK family.

The catalysed reaction is a lipid A disaccharide + ATP = a lipid IVA + ADP + H(+). It functions in the pathway glycolipid biosynthesis; lipid IV(A) biosynthesis; lipid IV(A) from (3R)-3-hydroxytetradecanoyl-[acyl-carrier-protein] and UDP-N-acetyl-alpha-D-glucosamine: step 6/6. Its function is as follows. Transfers the gamma-phosphate of ATP to the 4'-position of a tetraacyldisaccharide 1-phosphate intermediate (termed DS-1-P) to form tetraacyldisaccharide 1,4'-bis-phosphate (lipid IVA). This is Tetraacyldisaccharide 4'-kinase from Desulfatibacillum aliphaticivorans.